Reading from the N-terminus, the 126-residue chain is Fluoride-specific ion channel FluC 2 (126 aa).

Helical transmembrane passes span 7–27, 37–57, 65–85, and 101–121; these read MWVGLGGGIGSLLRWWIGLSI, LGTFLINISGAFVIGYLSILF, YGDLMNAAVLTGILGGYTTFS, and AIAAGYLIISVLVGLAAAAFG. Residues Gly-79 and Thr-82 each contribute to the Na(+) site.

The protein belongs to the fluoride channel Fluc/FEX (TC 1.A.43) family.

It localises to the cell inner membrane. The enzyme catalyses fluoride(in) = fluoride(out). With respect to regulation, na(+) is not transported, but it plays an essential structural role and its presence is essential for fluoride channel function. Functionally, fluoride-specific ion channel. Important for reducing fluoride concentration in the cell, thus reducing its toxicity. The polypeptide is Fluoride-specific ion channel FluC 2 (Yersinia pseudotuberculosis serotype I (strain IP32953)).